The primary structure comprises 885 residues: Chitin synthase 3 (885 aa).

Positions 1-59 (MASQYPGHQLDDIPSTNVYRPPPRHEDDEAEHALLHQNSAYQSQYDDPHSRPLTPGQES) are disordered. Over residues 23-34 (PRHEDDEAEHAL) the composition is skewed to basic and acidic residues. Polar residues predominate over residues 36–45 (HQNSAYQSQY). The next 6 helical transmembrane spans lie at 565-585 (FFLH…WFSL), 620-640 (IINT…FILA), 650-670 (VAYI…IVLS), 707-727 (IVII…FLYM), 735-755 (SFAQ…IYAF), and 837-857 (LVAT…SDSL).

This sequence belongs to the chitin synthase family. Class III subfamily.

Its subcellular location is the cell membrane. It catalyses the reaction [(1-&gt;4)-N-acetyl-beta-D-glucosaminyl](n) + UDP-N-acetyl-alpha-D-glucosamine = [(1-&gt;4)-N-acetyl-beta-D-glucosaminyl](n+1) + UDP + H(+). In terms of biological role, polymerizes chitin, a structural polymer of the cell wall and septum, by transferring the sugar moiety of UDP-GlcNAc to the non-reducing end of the growing chitin polymer. Is not only stable at different pH, but is also able to tolerate a broad temperature range. With CHS2, plays an important role in virulence. The protein is Chitin synthase 3 of Exophiala dermatitidis (Black yeast-like fungus).